The chain runs to 587 residues: Aspartate--tRNA ligase (587 aa).

Glutamate 174 provides a ligand contact to L-aspartate. The segment at glutamine 198 to lysine 201 is aspartate. Arginine 220 provides a ligand contact to L-aspartate. ATP contacts are provided by residues arginine 220–glutamate 222 and glutamine 229. Residue histidine 443 coordinates L-aspartate. Glutamate 477 contacts ATP. Arginine 484 lines the L-aspartate pocket. Glycine 529–arginine 532 serves as a coordination point for ATP.

The protein belongs to the class-II aminoacyl-tRNA synthetase family. Type 1 subfamily. As to quaternary structure, homodimer.

It localises to the cytoplasm. It catalyses the reaction tRNA(Asp) + L-aspartate + ATP = L-aspartyl-tRNA(Asp) + AMP + diphosphate. Functionally, catalyzes the attachment of L-aspartate to tRNA(Asp) in a two-step reaction: L-aspartate is first activated by ATP to form Asp-AMP and then transferred to the acceptor end of tRNA(Asp). The chain is Aspartate--tRNA ligase from Streptococcus pneumoniae (strain ATCC 700669 / Spain 23F-1).